The following is a 435-amino-acid chain: GTPase Obg (435 aa).

In terms of domain architecture, Obg spans 6 to 164 (ADFVDRVKIF…RWLELELKIL (159 aa)). An OBG-type G domain is found at 165–335 (ADVGLVGYPN…LVSKLASIVR (171 aa)). Residues 171–178 (GYPNVGKS), 196–200 (FTTLI), 217–220 (DIPG), 287–290 (NKID), and 316–318 (SAL) each bind GTP. 2 residues coordinate Mg(2+): Ser-178 and Thr-198. The OCT domain occupies 357 to 435 (RRLPEKFHLE…IGDFEFEYRE (79 aa)).

It belongs to the TRAFAC class OBG-HflX-like GTPase superfamily. OBG GTPase family. As to quaternary structure, monomer. Mg(2+) is required as a cofactor.

It localises to the cytoplasm. An essential GTPase which binds GTP, GDP and possibly (p)ppGpp with moderate affinity, with high nucleotide exchange rates and a fairly low GTP hydrolysis rate. Plays a role in control of the cell cycle, stress response, ribosome biogenesis and in those bacteria that undergo differentiation, in morphogenesis control. The sequence is that of GTPase Obg from Thermotoga sp. (strain RQ2).